The sequence spans 578 residues: Zinc finger protein with KRAB and SCAN domains 8 (578 aa).

Positions 1–20 are disordered; the sequence is MAEESRKPSAPSPPDQTPEE. Ser-12 carries the phosphoserine modification. Residue Lys-26 forms a Glycyl lysine isopeptide (Lys-Gly) (interchain with G-Cter in SUMO2) linkage. Residues 51 to 133 enclose the SCAN box domain; that stretch reads RLRFRQLRYQ…TLLEDLERQI (83 aa). The interval 158–205 is disordered; it reads ASAPEPPNTQLQSEATQHKSPVPQESQERAMSTSQSPTRSQKGSSGDQ. The segment covering 165-205 has biased composition (polar residues); it reads NTQLQSEATQHKSPVPQESQERAMSTSQSPTRSQKGSSGDQ. Residues Lys-176 and Lys-199 each participate in a glycyl lysine isopeptide (Lys-Gly) (interchain with G-Cter in SUMO2) cross-link. Phosphoserine is present on Ser-201. In terms of domain architecture, KRAB spans 220-316; it reads EKIEDMAVSL…GRLERQRGNP (97 aa). Residues Lys-221, Lys-272, and Lys-288 each participate in a glycyl lysine isopeptide (Lys-Gly) (interchain with G-Cter in SUMO2) cross-link. 2 C2H2-type zinc fingers span residues 322–344 and 350–372; these read HKCD…WRIH and YQCN…QDIH. Residues Lys-374 and Lys-376 each participate in a glycyl lysine isopeptide (Lys-Gly) (interchain with G-Cter in SUMO2) cross-link. 7 consecutive C2H2-type zinc fingers follow at residues 378–400, 406–428, 434–456, 462–484, 490–512, 518–540, and 546–568; these read YHCK…QRIH, YQCN…QRIH, YECN…QRIH, YECD…QRSH, YKCN…QRIH, and YKCK…LRIH. Glycyl lysine isopeptide (Lys-Gly) (interchain with G-Cter in SUMO2) cross-links involve residues Lys-413 and Lys-441. Residue Lys-502 forms a Glycyl lysine isopeptide (Lys-Gly) (interchain with G-Cter in SUMO2) linkage. A Glycyl lysine isopeptide (Lys-Gly) (interchain with G-Cter in SUMO2) cross-link involves residue Lys-572.

This sequence belongs to the krueppel C2H2-type zinc-finger protein family.

The protein resides in the nucleus. Its function is as follows. May be involved in transcriptional regulation. The polypeptide is Zinc finger protein with KRAB and SCAN domains 8 (ZKSCAN8) (Homo sapiens (Human)).